Here is a 225-residue protein sequence, read N- to C-terminus: Cytidylate kinase (225 aa).

Residue 11 to 19 (GPAAAGKST) coordinates ATP.

Belongs to the cytidylate kinase family. Type 1 subfamily.

The protein localises to the cytoplasm. The enzyme catalyses CMP + ATP = CDP + ADP. The catalysed reaction is dCMP + ATP = dCDP + ADP. This Bacillus anthracis (strain A0248) protein is Cytidylate kinase.